Here is a 275-residue protein sequence, read N- to C-terminus: Ribosomal RNA small subunit methyltransferase A (275 aa).

Residues N21, L23, G48, E69, D94, and N115 each coordinate S-adenosyl-L-methionine.

It belongs to the class I-like SAM-binding methyltransferase superfamily. rRNA adenine N(6)-methyltransferase family. RsmA subfamily.

It is found in the cytoplasm. It carries out the reaction adenosine(1518)/adenosine(1519) in 16S rRNA + 4 S-adenosyl-L-methionine = N(6)-dimethyladenosine(1518)/N(6)-dimethyladenosine(1519) in 16S rRNA + 4 S-adenosyl-L-homocysteine + 4 H(+). In terms of biological role, specifically dimethylates two adjacent adenosines (A1518 and A1519) in the loop of a conserved hairpin near the 3'-end of 16S rRNA in the 30S particle. May play a critical role in biogenesis of 30S subunits. This chain is Ribosomal RNA small subunit methyltransferase A, found in Clostridium botulinum (strain Langeland / NCTC 10281 / Type F).